Reading from the N-terminus, the 98-residue chain is Large ribosomal subunit protein bL28 (98 aa).

It belongs to the bacterial ribosomal protein bL28 family.

The sequence is that of Large ribosomal subunit protein bL28 from Chelativorans sp. (strain BNC1).